A 570-amino-acid chain; its full sequence is Carotenoid cleavage dioxygenase 8, chloroplastic (570 aa).

The N-terminal 56 residues, 1-56 (MASLITTKAMMSHHHVLSSTRITTLYSDNSIGDQQIKTKPQVPHRLFARRIFGVTR), are a transit peptide targeting the chloroplast. Fe cation-binding residues include His-254, His-305, His-372, and His-563.

This sequence belongs to the carotenoid oxygenase family. Fe(2+) is required as a cofactor. Expressed in flowers, siliques, inflorescence stems, petiole and leaves, and at a much higher level in roots.

It is found in the plastid. The protein localises to the chloroplast. The catalysed reaction is 9-cis-10'-apo-beta-carotenal + 2 O2 = (2E,4E,6E)-7-hydroxy-4-methylhepta-2,4,6-trienal + (11R)-carlactone. It carries out the reaction all-trans-10'-apo-beta-carotenal + O2 = (2E,4E,6E)-4-methylocta-2,4,6-trienedial + 13-apo-beta-carotenone. Functionally, involved in strigolactones biosynthesis by cleaving the C(27) 9-cis-10'-apo-beta-carotenal produced by CCD7. Produces the C(19) carlactone and a C(8) hydroxyaldehyde. Also shows lower activity with all-trans-10'-apo-beta-carotenal producing a C(9) dialdehyde and the C(18) 13-apo-beta-carotenone. Strigolactones are hormones that inhibit tillering and shoot branching through the MAX-dependent pathway, contribute to the regulation of shoot architectural response to phosphate-limiting conditions and function as rhizosphere signal that stimulates hyphal branching of arbuscular mycorrhizal fungi and trigger seed germination of root parasitic weeds. Also active on other carotenoid substrates like licopene or zeaxanthin. This is Carotenoid cleavage dioxygenase 8, chloroplastic from Arabidopsis thaliana (Mouse-ear cress).